We begin with the raw amino-acid sequence, 426 residues long: MNKTTFENVYYWEGKAQIPQEGQFIKLKEDKTLEVPDNPIIPFIEGDGIGPEITQAMLLIINTAVEKTYNGSKKIYWVELLAGDKAEEKTGERLPQETLDVLKESIVGIKGPLGTPVGKGVRSINSALRRAFDYYSAVRPVYWMGQATPIPNPERVDLVVFRENTDDVYAGVEFFAGTPEAKKVREFLIKEMGAKEEGFPEDVGITVKPMSEFKTKRHVRKALRYALENNKKNVAVIGKGNIMKATEGAFINWAFEVAEEPEFKGKVVTDPEAEPGEGQVKLTKVITDQMLMQLVLKPEAWDVIIAQNLNGDYVSDLAASLIGGPGFVPSGNIGDGYALFESTHGTAWDIAGKGIANPLSLTLSGAMMLEYIGWKEAAQKVYDAVRRTLAEHIGTPDIASGFQKQGIEAKAVGTMEFAEEISKRIE.

Positions 123, 125, 129, 139, and 162 each coordinate D-threo-isocitrate. Aspartate 312 contacts Mg(2+). NADP(+)-binding positions include 344–350 (HGTAWDI), asparagine 357, and lysine 404.

Belongs to the isocitrate and isopropylmalate dehydrogenases family. In terms of assembly, homodimer. It depends on Mg(2+) as a cofactor. Mn(2+) is required as a cofactor.

It carries out the reaction D-threo-isocitrate + NADP(+) = 2-oxoglutarate + CO2 + NADPH. In terms of biological role, catalyzes the oxidative decarboxylation of isocitrate to 2-oxoglutarate and carbon dioxide with the concomitant reduction of NADP(+). This Aquifex aeolicus (strain VF5) protein is Isocitrate dehydrogenase [NADP] (icd).